Consider the following 215-residue polypeptide: Large ribosomal subunit protein uL3 (215 aa).

The disordered stretch occupies residues glycine 136–lysine 155. At glutamine 151 the chain carries N5-methylglutamine.

Belongs to the universal ribosomal protein uL3 family. In terms of assembly, part of the 50S ribosomal subunit. Forms a cluster with proteins L14 and L19. In terms of processing, methylated by PrmB.

Its function is as follows. One of the primary rRNA binding proteins, it binds directly near the 3'-end of the 23S rRNA, where it nucleates assembly of the 50S subunit. This chain is Large ribosomal subunit protein uL3, found in Rickettsia canadensis (strain McKiel).